The chain runs to 512 residues: Rab11 family-interacting protein 2 (512 aa).

A C2 domain is found at 1 to 120 (MMLSEQAQKW…DKQRRKTEWF (120 aa)). Positions 15 to 102 (VQVTVLQAKD…GLDKFLGQVA (88 aa)) are necessary for its cellular translocation to the plasma membrane. 2 disordered regions span residues 169–239 (DKMK…MSSE) and 262–285 (VPES…KMNQ). The span at 178–188 (GTFSDTSSAII) shows a compositional bias: polar residues. Residues 226-236 (HSMSDLSGSHM) show a composition bias toward low complexity. Residue serine 227 is modified to Phosphoserine; by MARK2. At serine 277 the chain carries Phosphoserine. Residues 323–325 (NPF) carry the NPF 1 motif. The segment covering 361–374 (ERVTGKKDSRRSDK) has biased composition (basic and acidic residues). A disordered region spans residues 361–392 (ERVTGKKDSRRSDKLNNGGSDSPCDLKSPNAF). 2 consecutive short sequence motifs (NPF) follow at residues 406–408 (NPF) and 440–442 (NPF). In terms of domain architecture, FIP-RBD spans 437 to 499 (PDSNPFDATA…EETPSILRVP (63 aa)). Residues 465–512 (ELLRRKDTHIRELEDYIDNLLVRVMEETPSILRVPYEPSRKAGKFSNS) are necessary for interaction with AP2A1, RAB11A, subcellular location, endocytosis activity and homooligomerization.

As to quaternary structure, homooligomerizes in a Rab11-independent manner. Forms a heterooligomeric complex with RAB11FIP4. Interacts with AP2A1, MYO5B, RAB25 and REPS1. Interacts with RAB11A and RAB11B (activated GTP-bound form). Interacts with NPC1L1. Interacts (via NPF motifs) with EHD1 and EHD3. Interacts with TICAM2; this interaction directs RAB11FIP2 to the phagosome. Interacts with RAB14 and RAB25 (GTP-bound forms). Post-translationally, phosphorylation at Ser-227 by MARK2 regulates epithelial cell polarity.

It localises to the cell projection. It is found in the phagocytic cup. The protein resides in the cell membrane. Its subcellular location is the recycling endosome membrane. In terms of biological role, a Rab11 effector binding preferentially phosphatidylinositol 3,4,5-trisphosphate (PtdInsP3) and phosphatidic acid (PA) and acting in the regulation of the transport of vesicles from the endosomal recycling compartment (ERC) to the plasma membrane. Involved in insulin granule exocytosis. Also involved in receptor-mediated endocytosis and membrane trafficking of recycling endosomes, probably originating from clathrin-coated vesicles. Required in a complex with MYO5B and RAB11 for the transport of NPC1L1 to the plasma membrane. Also acts as a regulator of cell polarity. Plays an essential role in phagocytosis through a mechanism involving TICAM2, RAC1 and CDC42 Rho GTPases for controlling actin-dynamics. This Homo sapiens (Human) protein is Rab11 family-interacting protein 2 (RAB11FIP2).